The following is a 396-amino-acid chain: Tryptophan synthase beta chain (396 aa).

N6-(pyridoxal phosphate)lysine is present on lysine 88.

It belongs to the TrpB family. Tetramer of two alpha and two beta chains. Pyridoxal 5'-phosphate is required as a cofactor.

The catalysed reaction is (1S,2R)-1-C-(indol-3-yl)glycerol 3-phosphate + L-serine = D-glyceraldehyde 3-phosphate + L-tryptophan + H2O. It participates in amino-acid biosynthesis; L-tryptophan biosynthesis; L-tryptophan from chorismate: step 5/5. Its function is as follows. The beta subunit is responsible for the synthesis of L-tryptophan from indole and L-serine. The protein is Tryptophan synthase beta chain of Actinobacillus pleuropneumoniae serotype 5b (strain L20).